The sequence spans 188 residues: C-type lectin domain family 5 member A (188 aa).

Residues 1–4 are Cytoplasmic-facing; the sequence is MNWH. A helical; Signal-anchor for type II membrane protein membrane pass occupies residues 5 to 27; sequence MIISGLIVVVLKVVGMTLFLLYF. Residues 28 to 188 lie on the Extracellular side of the membrane; sequence PQIFNKSNDG…YRRICEKNAK (161 aa). Asn-32 carries an N-linked (GlcNAc...) asparagine glycan. The cysteines at positions 71 and 82 are disulfide-linked. One can recognise a C-type lectin domain in the interval 78 to 184; the sequence is YQARCFFLST…CDISYRRICE (107 aa). N-linked (GlcNAc...) asparagine glycans are attached at residues Asn-93, Asn-144, and Asn-151. 2 cysteine pairs are disulfide-bonded: Cys-99/Cys-183 and Cys-161/Cys-175.

In terms of assembly, monomer. Homodimer. The majority of CLEC5A is expressed as a monomeric form on macrophages. Interacts with TYROBP/DAP12. The interaction with TYROBP is required for CLEC5A cell surface expression. Interacts with HCST/DAP10. Forms a CLEC5A/TYROBP/HCST trimolecular complex depending almost solely on TYROBP. (Microbial infection) Interacts with dengue virus envelope protein E. Post-translationally, N-glycosylated. Contains sialic acid residues. Highly expressed in bone marrow with lower levels in synovium, lung and bronchus. Expressed in peripheral blood monocytes and in the monocyte/macrophage cell lines U-937 and Mono-Mac-6, but not in cell lines of other origins. Expression is down-regulated when monocytes differentiate into dendritic cells.

It localises to the cell membrane. Its function is as follows. Functions as a positive regulator of osteoclastogenesis. Cell surface receptor that signals via TYROBP. Regulates inflammatory responses. In terms of biological role, (Microbial infection) Critical macrophage receptor for dengue virus serotypes 1-4. The binding of dengue virus to CLEC5A triggers signaling through the phosphorylation of TYROBP. This interaction does not result in viral entry, but stimulates pro-inflammatory cytokine release. This chain is C-type lectin domain family 5 member A (CLEC5A), found in Homo sapiens (Human).